We begin with the raw amino-acid sequence, 437 residues long: UDP-N-acetylmuramate--L-alanine ligase (437 aa).

108–114 provides a ligand contact to ATP; that stretch reads GAHGKTS.

This sequence belongs to the MurCDEF family.

It localises to the cytoplasm. The enzyme catalyses UDP-N-acetyl-alpha-D-muramate + L-alanine + ATP = UDP-N-acetyl-alpha-D-muramoyl-L-alanine + ADP + phosphate + H(+). It participates in cell wall biogenesis; peptidoglycan biosynthesis. Cell wall formation. This chain is UDP-N-acetylmuramate--L-alanine ligase, found in Staphylococcus carnosus (strain TM300).